Reading from the N-terminus, the 888-residue chain is MQTHEIRERFTNHFVNAGHQAVPSASLILDDPNLLFVNAGMVPFKPYFLGQQTPPFENGTATSIQKCVRTLDIEEVGITTRHNTFFQMAGNFSFGQYFKEGAITHAWGLLTGSVADGGFGLDPERLWVTVYLDDDEAAEIWEKKIGVPSERIQRLGMADNYWSMGVPGPCGPCSEIYYDRGEKYGKEGGPVADDNRYMEIWNLVFMEKERGQGIGKDNFDILGDLPKKNIDTGMGVERVACILQDVENVYETDLLRPVIDVAETLTGTKYGSDNTSDIRFRVIADHSRTGMMLILDGVTPGNEGRGYILRRLLRRIIRSARLLGATGETMEQFMNTIMDTMTPSYPEIADNRERIMRVAVTEERAFLKTLVSGTHLFEEAATSIKAAGSTKVAGAQAFALHDTYGFPIDLTLEMAAEAGLEVDVEGFDSLMAEQRSRAKADSQAKKHGHTDLSIYREWVDNNPTVFTGFEELDSQSKVLGLLSDGAKISEATEGQEVEVILDQSPLYAESGGQLGDRGQILLGDTVLDVHDVQKIGKKLWVHKALVANGGLAVGDEVVASVDKQWRHAARQAHTATHLIHAALRQVLGPTALQAGSMNKPGYLRFDFNYTEQLTPAQVEQIQAITNEAVDTDWAVNTVETSLEEAKAMGAMALFGENYGSTVRVVEIGGPFSMELCGGTHVAHSSQIGPVALLGESSIGSGVRRIEAYSGLNSFNYLSKERALAEGLASSLKAPSEELPERVAQLVDKLKAAEKEIEALHRQQLMAQTADLLNNAQEIGGVTTLLLRVKDNTNAGDLRTIATTLKDKLGDREGVLVIASDNAGKVPFVVAATKAAVARGAHSGNLVKLVGSYIDGRGGGKADLAQGSGANIAGLESAFGAVRAEIEAL.

Zn(2+)-binding residues include His-573, His-577, Cys-676, and His-680.

Belongs to the class-II aminoacyl-tRNA synthetase family. Requires Zn(2+) as cofactor.

Its subcellular location is the cytoplasm. It carries out the reaction tRNA(Ala) + L-alanine + ATP = L-alanyl-tRNA(Ala) + AMP + diphosphate. Its function is as follows. Catalyzes the attachment of alanine to tRNA(Ala) in a two-step reaction: alanine is first activated by ATP to form Ala-AMP and then transferred to the acceptor end of tRNA(Ala). Also edits incorrectly charged Ser-tRNA(Ala) and Gly-tRNA(Ala) via its editing domain. In Corynebacterium glutamicum (strain ATCC 13032 / DSM 20300 / JCM 1318 / BCRC 11384 / CCUG 27702 / LMG 3730 / NBRC 12168 / NCIMB 10025 / NRRL B-2784 / 534), this protein is Alanine--tRNA ligase.